A 63-amino-acid chain; its full sequence is Hyphancin-3F (63 aa).

The N-terminal stretch at 1–22 (MNFSRILFFVFACFVALASVSA) is a signal peptide. Residues 23 to 26 (APEP) constitute a propeptide, removed by a dipeptidylpeptidase. L61 carries the leucine amide modification.

Belongs to the cecropin family.

The protein localises to the secreted. Has antibacterial activity. The chain is Hyphancin-3F from Hyphantria cunea (Fall webworm moth).